The primary structure comprises 258 residues: Phosphate import ATP-binding protein PstB (258 aa).

In terms of domain architecture, ABC transporter spans 5–247 (IDVSGLNAYY…ERIFSNPSVQ (243 aa)). 37–44 (GPSGCGKS) contributes to the ATP binding site.

This sequence belongs to the ABC transporter superfamily. Phosphate importer (TC 3.A.1.7) family. In terms of assembly, the complex is composed of two ATP-binding proteins (PstB), two transmembrane proteins (PstC and PstA) and a solute-binding protein (PstS).

The protein localises to the cell membrane. It carries out the reaction phosphate(out) + ATP + H2O = ADP + 2 phosphate(in) + H(+). In terms of biological role, part of the ABC transporter complex PstSACB involved in phosphate import. Responsible for energy coupling to the transport system. The polypeptide is Phosphate import ATP-binding protein PstB (Streptomyces coelicolor (strain ATCC BAA-471 / A3(2) / M145)).